The primary structure comprises 122 residues: Large ribosomal subunit protein uL14c (122 aa).

This sequence belongs to the universal ribosomal protein uL14 family. Part of the 50S ribosomal subunit.

Its subcellular location is the plastid. The protein resides in the chloroplast. Binds to 23S rRNA. The protein is Large ribosomal subunit protein uL14c of Eucalyptus globulus subsp. globulus (Tasmanian blue gum).